The chain runs to 405 residues: DNA primase DnaG (405 aa).

A Toprim domain is found at 172-248 (DSIIVVEGRA…HIDYIARAPP (77 aa)). Mg(2+) is bound by residues E178, D222, and D224. The disordered stretch occupies residues 279-302 (AAGEKTESQMSPQQPQLTQTQPTT). Over residues 290 to 302 (PQQPQLTQTQPTT) the composition is skewed to low complexity.

This sequence belongs to the archaeal DnaG primase family. As to quaternary structure, forms a ternary complex with MCM helicase and DNA. Component of the archaeal exosome complex. Mg(2+) serves as cofactor.

The catalysed reaction is ssDNA + n NTP = ssDNA/pppN(pN)n-1 hybrid + (n-1) diphosphate.. Functionally, RNA polymerase that catalyzes the synthesis of short RNA molecules used as primers for DNA polymerase during DNA replication. Also part of the exosome, which is a complex involved in RNA degradation. Acts as a poly(A)-binding protein that enhances the interaction between heteromeric, adenine-rich transcripts and the exosome. The protein is DNA primase DnaG of Pyrobaculum islandicum (strain DSM 4184 / JCM 9189 / GEO3).